A 64-amino-acid polypeptide reads, in one-letter code: Probable cytochrome c oxidase subunit 5C-1 (64 aa).

A helical membrane pass occupies residues 15–34 (SVVKELFIGLALGLAAGGLW).

This sequence belongs to the cytochrome c oxidase subunit 5C family.

The protein localises to the mitochondrion inner membrane. In terms of biological role, this protein is one of the nuclear-coded polypeptide chains of cytochrome c oxidase, the terminal oxidase in mitochondrial electron transport. This is Probable cytochrome c oxidase subunit 5C-1 from Arabidopsis thaliana (Mouse-ear cress).